Here is a 205-residue protein sequence, read N- to C-terminus: CD83 antigen (205 aa).

Positions 1–19 (MSRGLQLLLLSCAYSLAPA) are cleaved as a signal peptide. The 95-residue stretch at 20–114 (TPEVKVACSE…YRCTLQDPDG (95 aa)) folds into the Ig-like V-type domain. The Extracellular segment spans residues 20–144 (TPEVKVACSE…EETFKKYRAE (125 aa)). The cysteines at positions 35 and 107 are disulfide-linked. Positions 60–69 (METPQEDHLR) are enriched in basic and acidic residues. A disordered region spans residues 60–81 (METPQEDHLRGQHYHQKGQNGS). 3 N-linked (GlcNAc...) asparagine glycosylation sites follow: N79, N96, and N117. A helical transmembrane segment spans residues 145-166 (IVLLLALVIFYLTLIIFTCKFA). Residues 167–205 (RLQSIFPDFSKAGMERAFLPVTSPNKHLGLVTPHKTELV) lie on the Cytoplasmic side of the membrane.

Monomer. Homodimer. Homotrimer. Interacts with MARCHF1; this interaction antagonizes MARCHF1-mediated MHC II and CD86 down-regulation. Post-translationally, glycosylated when expressed on activated dendritic cells. As to expression, expressed by activated lymphocytes, Langerhans cells and activatd dendritic cells.

The protein resides in the membrane. Its function is as follows. Transmembrane glycoprotein predominantly found on the surface of many immune cells including dendritic cells or lymphocytes that plays various roles in immune response regulation. Plays an essential role in CD4(+) T-selection, differentiation and stability by regulating the activity of the major E3 ubiquitin ligase responsible for controlling MHCII trafficking MARCHF8. Also inhibits MARCHF1 association with MHCII or CD86 to prevent their ubiquitination and subsequent degradation. In addition, acts as an important modulator of protective responses against acute infections. This Homo sapiens (Human) protein is CD83 antigen (CD83).